Here is a 262-residue protein sequence, read N- to C-terminus: Type II restriction enzyme MspI (262 aa).

The enzyme catalyses Endonucleolytic cleavage of DNA to give specific double-stranded fragments with terminal 5'-phosphates.. Functionally, a P subtype restriction enzyme that recognizes the double-stranded sequence 5'-CCGG-3' and cleaves after C-1. The polypeptide is Type II restriction enzyme MspI (mspIR) (Moraxella sp).